We begin with the raw amino-acid sequence, 208 residues long: Floral homeotic protein PISTILLATA (208 aa).

The region spanning 3-57 (RGKIEIKRIENANNRVVTFSKRRNGLVKKAKEITVLCDAKVALIIFASNGKMIDY) is the MADS-box domain. A coiled-coil region spans residues 75–117 (SGKKLWDAKHENLSNEIDRIKKENDSLQLELRHLKGEDIQSLN). One can recognise a K-box domain in the interval 84-170 (HENLSNEIDR…TFQLQQQEMA (87 aa)).

Forms a heterodimer with APETALA3, capable of binding to CArG-box sequences. AP3/PI heterodimer binds AP1 or SEP3 to form a ternary complex.

The protein localises to the nucleus. Probable transcription factor involved in the genetic control of flower development. Is required for normal development of petals and stamens in the wild-type flower. Forms a heterodimer with APETALA3 that is required for autoregulation of both AP3 and PI genes. AP3/PI heterodimer interacts with APETALA1 or SEPALLATA3 to form a ternary complex that could be responsible for the regulation of the genes involved in the flower development. AP3/PI heterodimer activates the expression of NAP. AP3/PI prevents GATA22/GNL and GATA21/GNC expression. In Arabidopsis thaliana (Mouse-ear cress), this protein is Floral homeotic protein PISTILLATA (PI).